Reading from the N-terminus, the 88-residue chain is MSVYGLLSLLIFIVLAVNTSNGDPGKDCSEKEEYLYDSSNCDIFYECDESLKPQRMMCGPGTGWNQDKLVCDFLTNIDCTRGGKVAPK.

An N-terminal signal peptide occupies residues 1–16; sequence MSVYGLLSLLIFIVLA. In terms of domain architecture, Chitin-binding type-2 spans 25–81; that stretch reads GKDCSEKEEYLYDSSNCDIFYECDESLKPQRMMCGPGTGWNQDKLVCDFLTNIDCTR. Cysteines 58 and 71 form a disulfide.

This sequence belongs to the scoloptoxin-01 family. Post-translationally, contains 3 disulfide bonds. As to expression, expressed by the venom gland.

The protein resides in the secreted. This is U-scoloptoxin(01)-Tl1a from Thereuopoda longicornis (Long-legged centipede).